We begin with the raw amino-acid sequence, 424 residues long: Dual-specificity RNA methyltransferase RlmN (424 aa).

Catalysis depends on E132, which acts as the Proton acceptor. The Radical SAM core domain maps to 138–388; sequence GPDRGTLCVS…VRTPRGRDIL (251 aa). C145 and C391 form a disulfide bridge. [4Fe-4S] cluster contacts are provided by C152, C156, and C159. S-adenosyl-L-methionine is bound by residues 217–218, S249, 271–273, and N348; these read GE and SLH. The S-methylcysteine intermediate role is filled by C391.

Belongs to the radical SAM superfamily. RlmN family. It depends on [4Fe-4S] cluster as a cofactor.

The protein localises to the cytoplasm. The enzyme catalyses adenosine(2503) in 23S rRNA + 2 reduced [2Fe-2S]-[ferredoxin] + 2 S-adenosyl-L-methionine = 2-methyladenosine(2503) in 23S rRNA + 5'-deoxyadenosine + L-methionine + 2 oxidized [2Fe-2S]-[ferredoxin] + S-adenosyl-L-homocysteine. The catalysed reaction is adenosine(37) in tRNA + 2 reduced [2Fe-2S]-[ferredoxin] + 2 S-adenosyl-L-methionine = 2-methyladenosine(37) in tRNA + 5'-deoxyadenosine + L-methionine + 2 oxidized [2Fe-2S]-[ferredoxin] + S-adenosyl-L-homocysteine. Its function is as follows. Specifically methylates position 2 of adenine 2503 in 23S rRNA and position 2 of adenine 37 in tRNAs. m2A2503 modification seems to play a crucial role in the proofreading step occurring at the peptidyl transferase center and thus would serve to optimize ribosomal fidelity. This is Dual-specificity RNA methyltransferase RlmN from Methylobacterium radiotolerans (strain ATCC 27329 / DSM 1819 / JCM 2831 / NBRC 15690 / NCIMB 10815 / 0-1).